A 401-amino-acid chain; its full sequence is Voltage-gated potassium channel subunit beta-1 (401 aa).

Positions 90, 91, 97, and 119 each coordinate NADP(+). The Proton donor/acceptor role is filled by Y124. NADP(+) contacts are provided by N192, S222, R223, Q248, W277, S278, P279, L280, A281, C282, K288, R298, G357, S359, Q363, E366, and N367.

It belongs to the shaker potassium channel beta subunit family. Homotetramer. Interaction with tetrameric potassium channel alpha subunits gives rise to a heterooctamer. Identified in potassium channel complexes containing KCNA1, KCNA2, KCNA4, KCNA5, KCNA6, KCNAB1 and KCNAB2. Part of a complex containing KCNA1, KCNA4 and LGI1; interaction with LGI1 inhibits down-regulation of KCNA1 channel activity. Interacts with the dimer formed by GNB1 and GNG2; this enhances KCNA1 binding. Interacts with SQSTM. In terms of tissue distribution, detected in brain, in hippocampus and striatum (at protein level). Predominantly expressed in brain. No expression found in heart, skeletal muscle or kidney. In the late embryonic and early neonatal brain, highly expressed in hippocampus, cerebral cortex, caudate putamen, colliculus and cerebellum.

It localises to the cytoplasm. Its subcellular location is the membrane. The protein resides in the cell membrane. The catalysed reaction is a primary alcohol + NADP(+) = an aldehyde + NADPH + H(+). It catalyses the reaction a secondary alcohol + NADP(+) = a ketone + NADPH + H(+). Functionally, regulatory subunit of the voltage-gated potassium (Kv) Shaker channels composed of pore-forming and potassium-conducting alpha subunits and of regulatory beta subunits. The beta-1/KCNAB1 cytoplasmic subunit mediates closure of delayed rectifier potassium channels by physically obstructing the pore via its N-terminal domain and increases the speed of channel closure for other family members. Promotes the inactivation of KCNA1, KCNA2, KCNA4, KCNA5 and KCNA6 alpha subunit-containing channels. Displays nicotinamide adenine dinucleotide phosphate (NADPH)-dependent aldoketoreductase activity by catalyzing the NADPH-dependent reduction of a variety of endogenous aldehydes and ketones. The binding of NADPH is required for efficient down-regulation of potassium channel activity. Oxidation of the bound NADPH restrains N-terminal domain from blocking the channel, thereby decreasing N-type inactivation of potassium channel activity. The polypeptide is Voltage-gated potassium channel subunit beta-1 (Mus musculus (Mouse)).